A 216-amino-acid polypeptide reads, in one-letter code: MTYAYLFKYIIIGDTGVGKSCLLLQFTDKRFQPVHDLTIGVEFGARMVNIDGKQIKLQIWDTAGQESFRSITRSYYRGAAGALLVYDITRRETFNHLTSWLEDARQHSSSNMVIMLIGNKSDLESRRDVKREEGEAFAREHGLIFMETSAKTACNVEEAYINTAKEIYRKIQQGLFDVHNEANGIKIGPQQSITSSVGPCSPQQNVSDIGPDSGCC.

Glycine 16, valine 17, glycine 18, lysine 19, serine 20, cysteine 21, and threonine 38 together coordinate GTP. A Mg(2+)-binding site is contributed by serine 20. A Switch 1 motif is present at residues 37–42 (LTIGVE). Mg(2+)-binding residues include threonine 38 and aspartate 61. The Switch 2 signature appears at 63–72 (AGQESFRSIT). Residues glycine 64, asparagine 119, lysine 120, aspartate 122, alanine 150, and lysine 151 each coordinate GTP. The segment covering 189-207 (PQQSITSSVGPCSPQQNVS) has biased composition (polar residues). The interval 189-216 (PQQSITSSVGPCSPQQNVSDIGPDSGCC) is disordered. 2 S-geranylgeranyl cysteine lipidation sites follow: cysteine 215 and cysteine 216.

This sequence belongs to the small GTPase superfamily. Rab family. Interacts (in GTP-bound form) with GARIN4 (via N-terminus). Interacts (in GTP-bound form) with GARIN5A. Interacts (in GTP-bound form) with GARIN1B. Interacts with VPS39 and VPS41. The cofactor is Mg(2+).

The protein localises to the cell membrane. The protein resides in the endoplasmic reticulum membrane. It is found in the golgi apparatus membrane. It localises to the cytoplasmic vesicle. Its subcellular location is the secretory vesicle. The protein localises to the acrosome. The protein resides in the autophagosome membrane. It carries out the reaction GTP + H2O = GDP + phosphate + H(+). Regulated by guanine nucleotide exchange factors (GEFs) which promote the exchange of bound GDP for free GTP, GTPase activating proteins (GAPs) which increase the GTP hydrolysis activity, and GDP dissociation inhibitors (GDIs) which inhibit the dissociation of the nucleotide from the GTPase. Its function is as follows. The small GTPases Rab are key regulators of intracellular membrane trafficking, from the formation of transport vesicles to their fusion with membranes. Rabs cycle between active GTP-bound and inactive GDP-bound states. In their active state, drive transport of vesicular carriers from donor organelles to acceptor organelles to regulate the membrane traffic that maintains organelle identity and morphology. Regulates the compacted morphology of the Golgi. Promotes cytosolic DNA-induced innate immune responses. Regulates IFN responses against DNA viruses by regulating the CGAS-STING signaling axis. Together with RAB2A redundantly required for efficient autophagic flux. In Mus musculus (Mouse), this protein is Ras-related protein Rab-2B (Rab2b).